Reading from the N-terminus, the 549-residue chain is Endoplasmic reticulum mannosyl-oligosaccharide 1,2-alpha-mannosidase (549 aa).

The Cytoplasmic segment spans residues 1–4 (MKNS). A helical; Signal-anchor for type II membrane protein membrane pass occupies residues 5-24 (VGISIATIVAIIAAIYYVPW). The Lumenal segment spans residues 25-354 (YEHFERKSPG…LLASGSTEGL (330 aa)). N-linked (GlcNAc...) asparagine glycosylation is found at N96, N155, and N224. Residues C340 and C385 are joined by a disulfide bond. E399 functions as the Proton donor in the catalytic mechanism. C468 and C471 form a disulfide bridge. T525 lines the Ca(2+) pocket.

Belongs to the glycosyl hydrolase 47 family. As to quaternary structure, homodimer. The cofactor is Ca(2+).

Its subcellular location is the endoplasmic reticulum membrane. It catalyses the reaction N(4)-(alpha-D-Man-(1-&gt;2)-alpha-D-Man-(1-&gt;2)-alpha-D-Man-(1-&gt;3)-[alpha-D-Man-(1-&gt;2)-alpha-D-Man-(1-&gt;3)-[alpha-D-Man-(1-&gt;2)-alpha-D-Man-(1-&gt;6)]-alpha-D-Man-(1-&gt;6)]-beta-D-Man-(1-&gt;4)-beta-D-GlcNAc-(1-&gt;4)-beta-D-GlcNAc)-L-asparaginyl-[protein] (N-glucan mannose isomer 9A1,2,3B1,2,3) + 4 H2O = N(4)-(alpha-D-Man-(1-&gt;3)-[alpha-D-Man-(1-&gt;3)-[alpha-D-Man-(1-&gt;6)]-alpha-D-Man-(1-&gt;6)]-beta-D-Man-(1-&gt;4)-beta-D-GlcNAc-(1-&gt;4)-beta-D-GlcNAc)-L-asparaginyl-[protein] (N-glucan mannose isomer 5A1,2) + 4 beta-D-mannose. The catalysed reaction is N(4)-(alpha-D-Man-(1-&gt;2)-alpha-D-Man-(1-&gt;2)-alpha-D-Man-(1-&gt;3)-[alpha-D-Man-(1-&gt;3)-[alpha-D-Man-(1-&gt;2)-alpha-D-Man-(1-&gt;6)]-alpha-D-Man-(1-&gt;6)]-beta-D-Man-(1-&gt;4)-beta-D-GlcNAc-(1-&gt;4)-beta-D-GlcNAc)-L-asparaginyl-[protein] (N-glucan mannose isomer 8A1,2,3B1,3) + 3 H2O = N(4)-(alpha-D-Man-(1-&gt;3)-[alpha-D-Man-(1-&gt;3)-[alpha-D-Man-(1-&gt;6)]-alpha-D-Man-(1-&gt;6)]-beta-D-Man-(1-&gt;4)-beta-D-GlcNAc-(1-&gt;4)-beta-D-GlcNAc)-L-asparaginyl-[protein] (N-glucan mannose isomer 5A1,2) + 3 beta-D-mannose. The protein operates within protein modification; protein glycosylation. Involved in glycoprotein quality control as it is important for the targeting of misfolded glycoproteins for degradation. It primarily trims a single alpha-1,2-linked mannose residue from Man(9)GlcNAc(2) to produce Man(8)GlcNAc(2), but at high enzyme concentrations it further trims the carbohydrates to Man(5)GlcNAc(2). The chain is Endoplasmic reticulum mannosyl-oligosaccharide 1,2-alpha-mannosidase (MNS1) from Saccharomyces cerevisiae (strain ATCC 204508 / S288c) (Baker's yeast).